A 352-amino-acid chain; its full sequence is Ly6/PLAUR domain-containing protein 3 (352 aa).

The signal sequence occupies residues 1-32 (MDAARRGDTQPVMWTTRWLLLLPLLLCEGAQA). One can recognise a UPAR/Ly6 1 domain in the interval 35–128 (CYSCVQKADD…LNLTLRGLNP (94 aa)). Asn120, Asn131, Asn178, and Asn185 each carry an N-linked (GlcNAc...) asparagine glycan. The UPAR/Ly6 2 domain occupies 142-224 (CYSCMGLSRE…GSCCQGPRCN (83 aa)). Pro residues predominate over residues 236–249 (RIPPLVLLPPPTTP). The tract at residues 236 to 330 (RIPPLVLLPP…KGGAQIPSKG (95 aa)) is disordered. The span at 250–285 (APSTRTQNSSSTTSTTAPTTATTTIKPTTVQASHTS) shows a compositional bias: low complexity. Basic and acidic residues-rich tracts occupy residues 286–300 (STHE…EEGS) and 309–320 (HQDRSNMGKFPE). Residue Gly330 is the site of GPI-anchor amidated glycine attachment. The propeptide at 331-352 (GSDALGSWLSAILLTVVAGAML) is removed in mature form.

Interacts with AGR2 and AGR3. Binds laminin-1 and laminin-5. Interacts with LGALS3. Found predominantly on the basal layers of squamous epithelium. Expressed in the gravid uterus and on epithelial of the upper gastrointestinal tract. It has been found in tumor lines which metastasize via the lymphatic system.

It is found in the cell membrane. Functionally, supports cell migration. May be involved in tumor progression. This is Ly6/PLAUR domain-containing protein 3 (Lypd3) from Rattus norvegicus (Rat).